The following is a 262-amino-acid chain: Abhydrolase domain-containing protein ACTT2 (262 aa).

The Peroxisomal targeting signal type 1 signature appears at 260–262 (SKL).

This sequence belongs to the AB hydrolase superfamily. AKT2 hydrolase family.

Its subcellular location is the peroxisome. The protein operates within mycotoxin biosynthesis. Its function is as follows. Abhydrolase domain-containing protein; part of the gene clusters that mediate the biosynthesis of the host-selective toxins (HSTs) ACT-toxins responsible for brown spot of tangerine disease by the tangerine pathotype which affects tangerines and mandarins. ACT-toxins consist of three moieties, 9,10-epoxy-8-hydroxy-9-methyl-decatrienoic acid (EDA), valine and a polyketide. ACT-toxin I is toxic to both citrus and pear; toxin II the 5''-deoxy derivative of ACT-toxin I, is highly toxic to pear and slightly toxic to citrus. On cellular level, ACT-toxins affect plasma membrane of susceptible cells and cause a sudden increase in loss of K(+) after a few minutes of toxin treatment. The acyl-CoA ligase ACTT1, the hydrolase ACTT2, the enoyl-CoA hydratases ACTT3 and ACTT6, and the acyl-CoA synthetase ACTT5 are all involved in the biosynthesis of the AK-, AF- and ACT-toxin common 9,10-epoxy-8-hydroxy-9-methyl-decatrienoic acid (EDA) structural moiety. The exact role of each enzyme, and of additional enzymes identified within the AF-toxin clusters have still to be determined. On the other hand, ACTTS1 to ACTTS4 are specific to the tangerine pathotype. The function of ACTTS3 is to elongate the polyketide chain portion of ACT-toxin that is unique to this toxin. The enoyl-reductase ACTTS2 might complement the missing enoyl-reductase (ER) domain in ACTTS3 in the synthesis of the polyketide portion of ACT-toxin. The roles of the nonribosomal peptide synthetases-related proteins ACTTS1 and ACTTS4 have also still not been elucidated. This is Abhydrolase domain-containing protein ACTT2 from Alternaria alternata (Alternaria rot fungus).